A 473-amino-acid polypeptide reads, in one-letter code: Cysteine--tRNA ligase (473 aa).

Residue Cys-28 participates in Zn(2+) binding. The short motif at 30-40 is the 'HIGH' region element; the sequence is PTVYNMPHIGN. The Zn(2+) site is built by Cys-213, His-238, and Glu-242. The short motif at 270-274 is the 'KMSKS' region element; sequence KMSKS. Lys-273 lines the ATP pocket.

This sequence belongs to the class-I aminoacyl-tRNA synthetase family. Zn(2+) is required as a cofactor.

It is found in the cytoplasm. The catalysed reaction is tRNA(Cys) + L-cysteine + ATP = L-cysteinyl-tRNA(Cys) + AMP + diphosphate. The polypeptide is Cysteine--tRNA ligase (Methanosarcina acetivorans (strain ATCC 35395 / DSM 2834 / JCM 12185 / C2A)).